A 186-amino-acid chain; its full sequence is Translation initiation factor IF-3 (186 aa).

It belongs to the IF-3 family. As to quaternary structure, monomer.

The protein localises to the cytoplasm. Functionally, IF-3 binds to the 30S ribosomal subunit and shifts the equilibrium between 70S ribosomes and their 50S and 30S subunits in favor of the free subunits, thus enhancing the availability of 30S subunits on which protein synthesis initiation begins. The chain is Translation initiation factor IF-3 from Borreliella afzelii (strain PKo) (Borrelia afzelii).